The chain runs to 267 residues: MHEITLLQGLSLAALVFVLGIDFWLEALFLFRPIIVCTLTGAILGDIQTGLITGGLTELAFAGLTPAGGVQPPNPIMAGLMTTVIAWSTGVDAKTAIGLGLPFSLLMQYVILFFYSAFSLFMTKADKCAKEADTAAFSRLNWTTMLIVASAYAVIAFLCTYLAQGAMQALVKAMPAWLTHGFEVAGGILPAVGFGLLLRVMFKAQYIPYLIAGFLFVCYIQVSNLLPVAVLGAGFAVYEFFNAKSRQQAQPQPVASKNEEEDYSNGI.

The Periplasmic segment spans residues 1-10; it reads MHEITLLQGL. Residues 1 to 237 form the PTS EIIC type-4 domain; it reads MHEITLLQGL…VAVLGAGFAV (237 aa). Residues 11–31 form a helical membrane-spanning segment; the sequence is SLAALVFVLGIDFWLEALFLF. Topologically, residues 32-33 are cytoplasmic; that stretch reads RP. The chain crosses the membrane as a helical span at residues 34–54; sequence IIVCTLTGAILGDIQTGLITG. The Periplasmic portion of the chain corresponds to 55–66; sequence GLTELAFAGLTP. The chain crosses the membrane as a helical span at residues 67-87; it reads AGGVQPPNPIMAGLMTTVIAW. The Cytoplasmic portion of the chain corresponds to 88-94; sequence STGVDAK. Residues 95–115 traverse the membrane as a helical segment; the sequence is TAIGLGLPFSLLMQYVILFFY. At 116 to 141 the chain is on the periplasmic side; sequence SAFSLFMTKADKCAKEADTAAFSRLN. Residues 142–162 traverse the membrane as a helical segment; sequence WTTMLIVASAYAVIAFLCTYL. The Cytoplasmic segment spans residues 163-177; sequence AQGAMQALVKAMPAW. A helical membrane pass occupies residues 178–198; sequence LTHGFEVAGGILPAVGFGLLL. Residues 199–209 lie on the Periplasmic side of the membrane; sequence RVMFKAQYIPY. The helical transmembrane segment at 210-230 threads the bilayer; that stretch reads LIAGFLFVCYIQVSNLLPVAV. At 231 to 267 the chain is on the cytoplasmic side; that stretch reads LGAGFAVYEFFNAKSRQQAQPQPVASKNEEEDYSNGI.

It is found in the cell inner membrane. In terms of biological role, the phosphoenolpyruvate-dependent sugar phosphotransferase system (PTS), a major carbohydrate active -transport system, catalyzes the phosphorylation of incoming sugar substrates concomitant with their translocation across the cell membrane. This system is involved in N-acetylgalactosamine transport. This Escherichia coli (strain K12) protein is N-acetylgalactosamine permease IIC component 1 (agaC).